The primary structure comprises 356 residues: 3-dehydroquinate synthase (356 aa).

NAD(+) is bound by residues 71–76 (EGEASK), 105–109 (GVTGD), 129–130 (TS), K142, and K151. E184, H247, and H264 together coordinate Zn(2+).

It belongs to the sugar phosphate cyclases superfamily. Dehydroquinate synthase family. Requires Co(2+) as cofactor. Zn(2+) serves as cofactor. The cofactor is NAD(+).

The protein resides in the cytoplasm. The catalysed reaction is 7-phospho-2-dehydro-3-deoxy-D-arabino-heptonate = 3-dehydroquinate + phosphate. Its pathway is metabolic intermediate biosynthesis; chorismate biosynthesis; chorismate from D-erythrose 4-phosphate and phosphoenolpyruvate: step 2/7. Functionally, catalyzes the conversion of 3-deoxy-D-arabino-heptulosonate 7-phosphate (DAHP) to dehydroquinate (DHQ). The polypeptide is 3-dehydroquinate synthase (Lactococcus lactis subsp. cremoris (strain MG1363)).